A 599-amino-acid chain; its full sequence is Chaperone protein DnaK (599 aa).

The residue at position 187 (Thr187) is a Phosphothreonine; by autocatalysis. The interval 575 to 599 (AQQAATENSKDSDTVEAEIVDDKAN) is disordered.

It belongs to the heat shock protein 70 family.

In terms of biological role, acts as a chaperone. The polypeptide is Chaperone protein DnaK (Mycoplasmopsis pulmonis (strain UAB CTIP) (Mycoplasma pulmonis)).